We begin with the raw amino-acid sequence, 362 residues long: sn-glycerol-3-phosphate import ATP-binding protein UgpC (362 aa).

Residues 4-235 (LKLQAVTKSY…PATLFVASFI (232 aa)) enclose the ABC transporter domain. 37–44 (GPSGCGKS) lines the ATP pocket.

It belongs to the ABC transporter superfamily. sn-glycerol-3-phosphate importer (TC 3.A.1.1.3) family. In terms of assembly, the complex is composed of two ATP-binding proteins (UgpC), two transmembrane proteins (UgpA and UgpE) and a solute-binding protein (UgpB).

The protein resides in the cell inner membrane. The catalysed reaction is sn-glycerol 3-phosphate(out) + ATP + H2O = sn-glycerol 3-phosphate(in) + ADP + phosphate + H(+). Functionally, part of the ABC transporter complex UgpBAEC involved in sn-glycerol-3-phosphate (G3P) import. Responsible for energy coupling to the transport system. The sequence is that of sn-glycerol-3-phosphate import ATP-binding protein UgpC from Yersinia enterocolitica serotype O:8 / biotype 1B (strain NCTC 13174 / 8081).